The primary structure comprises 685 residues: Putative pentatricopeptide repeat-containing protein At3g08820 (685 aa).

12 PPR repeats span residues 75 to 109 (NIFL…GLYL), 110 to 144 (HGFT…GFNH), 145 to 175 (DVAA…IPDR), 176 to 210 (SVVT…GVKP), 211 to 245 (DSYF…EMQK), 246 to 276 (NSFV…MVEK), 277 to 311 (DIVT…NLKP), 312 to 346 (DQFS…EFLT), 347 to 381 (NLFM…DIVI), 383 to 412 (NAAI…GISP), 413 to 443 (DGST…ISCV), and 449 to 479 (TVEH…MPMR). Residues 484–559 (VWGALLSGCR…IPGYSWIELE (76 aa)) form a type E motif region. The type E(+) motif stretch occupies residues 560–590 (GKVHEFLADDKSHPLSDKIYAKLEDLGNEMR). The interval 591-685 (LMGFVPTTEF…NGSCSCNDYW (95 aa)) is type DYW motif.

This sequence belongs to the PPR family. PCMP-H subfamily.

This chain is Putative pentatricopeptide repeat-containing protein At3g08820 (PCMP-H84), found in Arabidopsis thaliana (Mouse-ear cress).